The primary structure comprises 92 residues: Conotoxin Ac8.1 (92 aa).

The signal sequence occupies residues 1–19; it reads LKMGAMFVLLLLFTLASSQ. Positions 20–44 are excised as a propeptide; that stretch reads QEGDVQARKTSLKSDFYRALRQYDR. Glutamine 45 is modified (pyrrolidone carboxylic acid).

Belongs to the conotoxin S superfamily. In terms of processing, contains 5 disulfide bonds. Expressed by the venom duct.

The protein resides in the secreted. The sequence is that of Conotoxin Ac8.1 from Conus achatinus (Little frog cone).